Reading from the N-terminus, the 265-residue chain is MKESIYYNEENEIQISQGNCFPEELGHNPWRQPQSTARVIYLKVKDPIDTTQLLEITEIENPNYVLQAIQLAAAFQDALVPTETEFGEAIRFSMPKGLEVAKTIQPKGAVVAYTDQTLSQSNNQVSVMIDRVISVLKTVMGVALSGSIITQLTAAITDTFTNLNTQKDSAWVFWGKETSHQTNYTYNVMFAIQNETTGRVMMCVPIGFEIRVFTDKRTVLFLTTKDYANYSVNIQTLRFAQPLIDSRALSINDLSEALRSSKYLY.

Belongs to the cyt1/cyt2 endotoxin family. Active after proteolytic processing.

Its function is as follows. Kills the larvae of dipteran insects by making pores in the epithelial cell membrane of the insect midgut. In Bacillus thuringiensis subsp. neoleoensis, this protein is Type-1Ba cytolytic delta-endotoxin (cyt1Ba1).